Reading from the N-terminus, the 681-residue chain is MAKIKKKGTSGQAKNYITRTQAVRKLQISLPDFRRLCIFKGIYPREPRNKKKAAKNSTASTTFYYTKDIQYLLHEPLLRKFRDQKALSKKIARSLGRGEVSDAARLEKNHAPQLTLDHIIKERYPTFIDALRDLDDALSLLFLFANLPSTAHVPPKTIALCQRLCHEFQHYLIVTNSLRKSFLSIKGIYYQATIQGQDIMWLVPYRFVQRVNGDVDYRIMATFVDFYTTLLGFVNFRLYSTLGLRYPPKFDTRSDENGAELAAFTLEGRAVGETTKAIEGTKQTSSTANKEVSQDVQAKVDKVIKSAGLDQTKDDQAVQATEESTEEIDKFEPAAPEADTLLQPDISGDTAGALFAPFTFYISREAPKAPLEFILRSFGCKRIGWDAVLGDGAFTHDETDTRITHQIVDRPALPESSLPAVPAASENGAGAVQKVKPGTRIPGRTYIQPQWIWDCINEGKLLRPDLYAPGATLPPHLSPWVKPTRGAYDPRASLAEQEEEGEAEIAAEEEEEDSDEEMEEATDGKKVDAKAEDSAEEENEDEDDSVDGGMDVAGTDDDEDESEEEMEDEFGGFEEEAASESEDEEESARTQHQKELEAEAAGLPFSSSSAGGDSTKKKSSQAKKVASKKRKEEEELERQKMMMSRKKRKLLEKMMYSNKKQSEEAAKLRSKRRKLEKGAEK.

A BRCT domain is found at 350 to 469; the sequence is TAGALFAPFT…KLLRPDLYAP (120 aa). The interval 489 to 681 is disordered; sequence DPRASLAEQE…RRKLEKGAEK (193 aa). Residues 491–527 are a coiled coil; it reads RASLAEQEEEGEAEIAAEEEEEDSDEEMEEATDGKKV. The segment covering 496-521 has biased composition (acidic residues); that stretch reads EQEEEGEAEIAAEEEEEDSDEEMEEA. The segment covering 522 to 533 has biased composition (basic and acidic residues); it reads TDGKKVDAKAED. Composition is skewed to acidic residues over residues 534–546 and 554–586; these read SAEE…DDSV and GTDD…DEEE. Residues 574-681 adopt a coiled-coil conformation; it reads EEEAASESED…RRKLEKGAEK (108 aa). Residues 587–597 show a composition bias toward basic and acidic residues; it reads SARTQHQKELE. Residues 617–629 show a composition bias toward basic residues; sequence KKSSQAKKVASKK. The span at 630 to 640 shows a compositional bias: basic and acidic residues; it reads RKEEEELERQK.

This sequence belongs to the pescadillo family. In terms of assembly, component of the NOP7 complex, composed of erb1, nop7 and ytm1. The complex is held together by erb1, which interacts with nop7 via its N-terminal domain and with ytm1 via a high-affinity interaction between the seven-bladed beta-propeller domains of the 2 proteins. The NOP7 complex associates with the 66S pre-ribosome.

It is found in the nucleus. The protein resides in the nucleolus. Its subcellular location is the nucleoplasm. Component of the NOP7 complex, which is required for maturation of the 25S and 5.8S ribosomal RNAs and formation of the 60S ribosome. In Aspergillus oryzae (strain ATCC 42149 / RIB 40) (Yellow koji mold), this protein is Pescadillo homolog (nop7).